Consider the following 481-residue polypeptide: Bestrophin homolog 17 (481 aa).

Residues 1 to 27 (MTVSYQLDVSSGNPLLFLRLLGRWRGS) lie on the Cytoplasmic side of the membrane. A helical membrane pass occupies residues 28-48 (IWKSVVGDLFVWLLFYYAIYF). Residues 49-95 (AYRYAFSKQLQTVFEEISIHTDDRMKYLPLTFMLGFFVTTVFERWRS) are Extracellular-facing. Residues 96–116 (ALNVMPFIESVALSVAVLLPG) traverse the membrane as a helical segment. The Cytoplasmic segment spans residues 117-230 (KGREDRLTRR…AMETLIKFDA (114 aa)). A helical membrane pass occupies residues 231–251 (IPIPIAYPQVVFLAVRVYFAI). Over 252–274 (CLVSRQFLISDMKSKTQMDWPVP) the chain is Extracellular. Residues 275–295 (IMTVLEFIFVIGWMKVAEVLL) traverse the membrane as a helical segment. At 296 to 481 (NPLGEDDDDF…SSEESVDKKG (186 aa)) the chain is on the cytoplasmic side. The tract at residues 427 to 481 (AGMLNKSTQPDRPTMETVSEEHEPSHFYRGDRVHSSDSGLSKTQQSSEESVDKKG) is disordered. Residues 445 to 461 (SEEHEPSHFYRGDRVHS) are compositionally biased toward basic and acidic residues. The segment covering 462–474 (SDSGLSKTQQSSE) has biased composition (polar residues).

It belongs to the anion channel-forming bestrophin (TC 1.A.46) family. Calcium-sensitive chloride channel subfamily. As to quaternary structure, forms oligomers.

The protein localises to the cell membrane. Its function is as follows. Forms chloride channels. The polypeptide is Bestrophin homolog 17 (Caenorhabditis elegans).